The sequence spans 143 residues: CRISPR-associated endoribonuclease Cas2 (143 aa).

Asp-14 is a binding site for Mg(2+).

This sequence belongs to the CRISPR-associated endoribonuclease Cas2 protein family. As to quaternary structure, homodimer, forms a heterotetramer with a Cas1 homodimer. Mg(2+) is required as a cofactor.

Functionally, CRISPR (clustered regularly interspaced short palindromic repeat), is an adaptive immune system that provides protection against mobile genetic elements (viruses, transposable elements and conjugative plasmids). CRISPR clusters contain sequences complementary to antecedent mobile elements and target invading nucleic acids. CRISPR clusters are transcribed and processed into CRISPR RNA (crRNA). Functions as a ssRNA-specific endoribonuclease. Involved in the integration of spacer DNA into the CRISPR cassette. This is CRISPR-associated endoribonuclease Cas2 from Campylobacter jejuni subsp. jejuni serotype O:2 (strain ATCC 700819 / NCTC 11168).